We begin with the raw amino-acid sequence, 247 residues long: Segregation and condensation protein A (247 aa).

Belongs to the ScpA family. In terms of assembly, component of a cohesin-like complex composed of ScpA, ScpB and the Smc homodimer, in which ScpA and ScpB bind to the head domain of Smc. The presence of the three proteins is required for the association of the complex with DNA.

The protein localises to the cytoplasm. In terms of biological role, participates in chromosomal partition during cell division. May act via the formation of a condensin-like complex containing Smc and ScpB that pull DNA away from mid-cell into both cell halves. This chain is Segregation and condensation protein A, found in Mycoplasma mobile (strain ATCC 43663 / 163K / NCTC 11711) (Mesomycoplasma mobile).